Here is a 180-residue protein sequence, read N- to C-terminus: Large ribosomal subunit protein uL6 (180 aa).

This sequence belongs to the universal ribosomal protein uL6 family. Part of the 50S ribosomal subunit.

In terms of biological role, this protein binds to the 23S rRNA, and is important in its secondary structure. It is located near the subunit interface in the base of the L7/L12 stalk, and near the tRNA binding site of the peptidyltransferase center. This Clostridium botulinum (strain Langeland / NCTC 10281 / Type F) protein is Large ribosomal subunit protein uL6.